We begin with the raw amino-acid sequence, 148 residues long: Wound-induced proteinase inhibitor 2 (148 aa).

A signal peptide spans 1-25 (MAVHKEVNFVAYLLIVLGMFLYVDA). The stretch at 26 to 81 (KACTRECGNLGFGICPRSEGSPLNPICINCCSGYKGCNYYNSFGKFICEGESDPKR) is one 1; trypsin-inhibitory repeat. 8 disulfides stabilise this stretch: cysteine 28–cysteine 116, cysteine 32–cysteine 112, cysteine 40–cysteine 122, cysteine 52–cysteine 89, cysteine 55–cysteine 73, cysteine 56–cysteine 85, cysteine 62–cysteine 98, and cysteine 115–cysteine 133. Residues 83–141 (NACTFNCDPNIAYSRCPRSQGKSLIYPTGCTTCCTGYKGCYYFGKDGKFVCEGESDEPK) form a 2; chymotrypsin-inhibitory repeat.

It belongs to the protease inhibitor I20 (potato type II proteinase inhibitor) family.

It localises to the secreted. Functionally, potent inhibitor of both trypsin and chymotrypsin. This Solanum lycopersicum (Tomato) protein is Wound-induced proteinase inhibitor 2.